The chain runs to 708 residues: E3 ubiquitin-protein ligase Praja-2 (708 aa).

Positions 1 to 10 (MSQYTEKEPA) are enriched in basic and acidic residues. 2 disordered regions span residues 1 to 30 (MSQY…GYQT) and 53 to 90 (ERSL…SSLP). Serine 2 is modified (N-acetylserine). The span at 74 to 90 (ENSSGSSPLDQVDSSLP) shows a compositional bias: polar residues. Residue serine 196 is modified to Phosphoserine. Disordered stretches follow at residues 244-342 (GDTE…KQRS), 385-411 (TQRE…DNPF), and 425-495 (DEDS…QTSL). At threonine 246 the chain carries Phosphothreonine. Over residues 249-276 (VHQNSQEIQRSSQDEMVSTKQQNNTSQE) the composition is skewed to polar residues. Residues serine 253, serine 309, and serine 323 each carry the phosphoserine modification. Over residues 322–332 (ISSSQVDQETG) the composition is skewed to polar residues. Residues 333–342 (FNRHEAKQRS) show a composition bias toward basic and acidic residues. Serine 342 carries the phosphoserine; by PKA modification. A Phosphothreonine; by PKA modification is found at threonine 389. Residue serine 432 is modified to Phosphoserine. Residues 467 to 483 (NEPELQSDSSGPEEENQ) are compositionally biased toward acidic residues. Polar residues predominate over residues 484–493 (ELSLQEGEQT). The interval 531–708 (DGNNNLEDDS…PSNDSIAEAP (178 aa)) is interaction with PRKAR1A, PRKAR2A and PRKAR2B. A mediates interaction with TBC1D31 region spans residues 550–570 (WSLFDGFADGLGVAEAISYVD). The segment at 634 to 675 (CPICCSEYIKDDIATELPCHHFFHKPCVSIWLQKSGTCPVCR) adopts an RING-type; atypical zinc-finger fold. Positions 685-708 (ASAAPSSEPDPDAPPSNDSIAEAP) are disordered. The span at 699–708 (PSNDSIAEAP) shows a compositional bias: low complexity.

In terms of assembly, binds ubiquitin-conjugating enzymes (E2s). In vitro, interacts with the ubiquitin-conjugating enzyme, UBE2D2. The phosphorylated form interacts with PRKAR1A, PRKAR2A and PRKAR2B. Binds the catalytic subunits of cAMP-dependent protein kinase. Interacts with MFHAS1. Interacts with TBC1D31; the interaction is direct and recruits PJA2 to centrosomes.

It localises to the cytoplasm. The protein resides in the cell membrane. It is found in the endoplasmic reticulum membrane. The protein localises to the golgi apparatus membrane. Its subcellular location is the synapse. It localises to the postsynaptic density. The protein resides in the cytoskeleton. It is found in the microtubule organizing center. The protein localises to the centrosome. The catalysed reaction is S-ubiquitinyl-[E2 ubiquitin-conjugating enzyme]-L-cysteine + [acceptor protein]-L-lysine = [E2 ubiquitin-conjugating enzyme]-L-cysteine + N(6)-ubiquitinyl-[acceptor protein]-L-lysine.. The protein operates within protein modification; protein ubiquitination. In terms of biological role, has E2-dependent E3 ubiquitin-protein ligase activity. Responsible for ubiquitination of cAMP-dependent protein kinase type I and type II-alpha/beta regulatory subunits and for targeting them for proteasomal degradation. Essential for PKA-mediated long-term memory processes. Through the ubiquitination of MFHAS1, positively regulates the TLR2 signaling pathway that leads to the activation of the downstream p38 and JNK MAP kinases and promotes the polarization of macrophages toward the pro-inflammatory M1 phenotype. Plays a role in ciliogenesis by ubiquitinating OFD1. This chain is E3 ubiquitin-protein ligase Praja-2 (PJA2), found in Pongo abelii (Sumatran orangutan).